The following is a 515-amino-acid chain: Iroquois-class homeodomain protein IRX-4 (515 aa).

The homeobox; TALE-type DNA-binding region spans 144 to 205; it reads GTRRKNATRE…NARRRLKKEN (62 aa). Disordered regions lie at residues 205-258, 278-307, and 398-425; these read NKMT…ELEL, TPFQSLDSGPERIPASSDGPGTGKEASTTL, and GPTGVSATTPASSPAVTAPSGALDRHQD. Positions 214 to 223 are enriched in basic and acidic residues; it reads KCADEKRPYG. The segment covering 224–236 has biased composition (acidic residues); sequence EGEEEEAGEEESR. Residues 237-257 show a composition bias toward basic and acidic residues; that stretch reads EEPLKSAKSEGHAGKDDKELE. Residues 399–419 are compositionally biased toward low complexity; that stretch reads PTGVSATTPASSPAVTAPSGA.

It belongs to the TALE/IRO homeobox family. As to quaternary structure, interacts with the vitamin D receptor VDR but doesn't affect its transactivation activity. Expressed in the developing central nervous system, skin, and vibrissae, but predominantly expressed in the cardiac ventricles of the developing heart. Not expressed in the developing metanephric kidney or adult kidney.

The protein resides in the nucleus. Functionally, likely to be an important mediator of ventricular differentiation during cardiac development. This chain is Iroquois-class homeodomain protein IRX-4 (Irx4), found in Mus musculus (Mouse).